A 111-amino-acid chain; its full sequence is Nucleoid-associated protein glr3498 (111 aa).

It belongs to the YbaB/EbfC family. As to quaternary structure, homodimer.

It localises to the cytoplasm. It is found in the nucleoid. Binds to DNA and alters its conformation. May be involved in regulation of gene expression, nucleoid organization and DNA protection. In Gloeobacter violaceus (strain ATCC 29082 / PCC 7421), this protein is Nucleoid-associated protein glr3498.